Consider the following 382-residue polypeptide: Putative acetyl-CoA C-acetyltransferase VraB (382 aa).

Catalysis depends on C86, which acts as the Acyl-thioester intermediate. H338 (proton acceptor) is an active-site residue.

Belongs to the thiolase-like superfamily. Thiolase family.

This is Putative acetyl-CoA C-acetyltransferase VraB (vraB) from Staphylococcus epidermidis (strain ATCC 35984 / DSM 28319 / BCRC 17069 / CCUG 31568 / BM 3577 / RP62A).